Consider the following 596-residue polypeptide: Elongation factor 4 (596 aa).

A tr-type G domain is found at 2–184 (KQIRNFSIIA…VIVAKIPPPE (183 aa)). Residues 14-19 (DHGKST) and 131-134 (NKID) each bind GTP.

It belongs to the TRAFAC class translation factor GTPase superfamily. Classic translation factor GTPase family. LepA subfamily.

It is found in the cell inner membrane. It catalyses the reaction GTP + H2O = GDP + phosphate + H(+). Required for accurate and efficient protein synthesis under certain stress conditions. May act as a fidelity factor of the translation reaction, by catalyzing a one-codon backward translocation of tRNAs on improperly translocated ribosomes. Back-translocation proceeds from a post-translocation (POST) complex to a pre-translocation (PRE) complex, thus giving elongation factor G a second chance to translocate the tRNAs correctly. Binds to ribosomes in a GTP-dependent manner. This is Elongation factor 4 from Shewanella baltica (strain OS155 / ATCC BAA-1091).